Reading from the N-terminus, the 55-residue chain is Large ribosomal subunit protein bL33 (55 aa).

Belongs to the bacterial ribosomal protein bL33 family.

This chain is Large ribosomal subunit protein bL33, found in Alcanivorax borkumensis (strain ATCC 700651 / DSM 11573 / NCIMB 13689 / SK2).